Consider the following 314-residue polypeptide: L-lactate dehydrogenase 2 (314 aa).

NAD(+) contacts are provided by residues Val-16, Asp-37, Lys-42, Tyr-68, and Gly-82–Leu-83. Residues Gln-85, Arg-91, and Asn-123–Asp-126 each bind substrate. Residues Ala-121–Asn-123 and Ser-146 each bind NAD(+). Asp-151 to Arg-154 contributes to the substrate binding site. Beta-D-fructose 1,6-bisphosphate-binding residues include Arg-156 and His-171. Catalysis depends on His-178, which acts as the Proton acceptor. Tyr-223 is modified (phosphotyrosine). Thr-232 is a substrate binding site.

Belongs to the LDH/MDH superfamily. LDH family. As to quaternary structure, homotetramer.

It is found in the cytoplasm. It carries out the reaction (S)-lactate + NAD(+) = pyruvate + NADH + H(+). It participates in fermentation; pyruvate fermentation to lactate; (S)-lactate from pyruvate: step 1/1. With respect to regulation, allosterically activated by fructose 1,6-bisphosphate (FBP). Catalyzes the conversion of lactate to pyruvate. The sequence is that of L-lactate dehydrogenase 2 from Bacillus cereus (strain ATCC 14579 / DSM 31 / CCUG 7414 / JCM 2152 / NBRC 15305 / NCIMB 9373 / NCTC 2599 / NRRL B-3711).